The chain runs to 392 residues: MSREPTPPLPGDMSTSPVAESWCYTQVKVVKFSYMWTINNFSFCREEMGEVLKSSTFSSGPNDKMKWCLRVNPKGLDDESKDYLSLYLLLVSCPKSEVRAKFKFSLLNDKREETKAMESQRAYRFVQGKDWGFKKFIRRDFLLDEANGLLPDDKLTLFCEVSVVQDSVNVSGHTSTNTLKVPECRLAEDLGNLWENTRFTDCCFFVRGKEFKAHKSVLAARSPVFNAMFEHEMEECTKNRVEINDLDPEVFKEMMRFVYTGKAPNLDKMADNLLAAADKYALERLKVMCEEALCSNLSVENVADTLVLADLHSAEQLKAQAIDFINRCSVLRQLGCKDGKNWNNNQATDIMETSGWKSMIQSHPHLVAEAFRALASSQCPQFGIPRKRLKQS.

One can recognise an MATH domain in the interval 31-161 (KFSYMWTINN…DDKLTLFCEV (131 aa)). One can recognise a BTB domain in the interval 200–267 (TDCCFFVRGK…VYTGKAPNLD (68 aa)).

Belongs to the Tdpoz family. Homodimer. Heterodimer with SPOP. Component of cullin-RING-based BCR (BTB-CUL3-RBX1) E3 ubiquitin-protein ligase complexes containing homodimeric SPOPL or the heterodimer formed by SPOP and SPOPL. Interacts with CUL3 and MACROH2A1.

The protein localises to the nucleus. It participates in protein modification; protein ubiquitination. Its function is as follows. Component of a cullin-RING-based BCR (BTB-CUL3-RBX1) E3 ubiquitin-protein ligase complex that mediates the ubiquitination and subsequent proteasomal degradation of target proteins, but with relatively low efficiency. Cullin-RING-based BCR (BTB-CUL3-RBX1) E3 ubiquitin-protein ligase complexes containing homodimeric SPOPL or the heterodimer formed by SPOP and SPOPL are less efficient than ubiquitin ligase complexes containing only SPOP. May function to down-regulate the activity of cullin-RING-based BCR (BTB-CUL3-RBX1) E3 ubiquitin-protein ligase complexes that contain SPOP. This chain is Speckle-type POZ protein-like (Spopl), found in Mus musculus (Mouse).